The sequence spans 556 residues: MNLAVASFRGNFGVLSQCSSCCSLQFQPFVAATSSLNFGQTGTSRRKKDLKLERVFRKRETLVRVTETQTEPEGNDDEDNKEGKESSADDPPTKIPTELNSQSTVVNEAPGNEEENKAQFSSQDGDKLEVSSGSPLPGVNVSIIIHVIYKDDSIMFSGCLSFIKSCCEQPLQLDDSMRLPKETIDILRGQVFGFDTFFVTSQEPYEGGVLFKGNLRGKPATSYEKIKTRMENNFGDQYKLFLLTNPEDDKPVAVVVPRRSLEPETTAVPEWFAAGSFGLVALFTLFLRNVPALQSDLLSAFDNLELLKDGLPGALVTALVLGVHELGHILVANSLGIKLGVPFFVPSWQIGSFGAITRIKNIVAKREDLLKVAAAGPLAGFSLGLILFLIGLFVPPSDGIGVVVDASVFHESFLAGGIAKLLLGDALKEGTSISLNPLVIWAWAGLLINGINSIPAGELDGGKIAFSIWGRKTATRLTGASIALLGLSALFSDVAFYWVVLIFFLQRGPIAPLAEEITVPDDKYVSLGILVLFLSLLVCLPYPFAFTGNEAMMIGL.

A chloroplast-targeting transit peptide spans 1-64 (MNLAVASFRG…VFRKRETLVR (64 aa)). Positions 63-133 (VRVTETQTEP…DGDKLEVSSG (71 aa)) are disordered. 7 helical membrane passes run 267-287 (AVPE…TLFL), 311-331 (LPGA…HILV), 336-356 (GIKL…FGAI), 374-394 (AAGP…GLFV), 437-457 (PLVI…IPAG), 484-504 (LLGL…LIFF), and 527-547 (LGIL…FAFT).

The protein belongs to the peptidase M50B family.

Its subcellular location is the plastid. It localises to the chloroplast membrane. Functionally, probable membrane-associated metalloprotease that may be involved in chloroplast development. The sequence is that of Probable zinc metalloprotease EGY2, chloroplastic (EGY2) from Arabidopsis thaliana (Mouse-ear cress).